The primary structure comprises 394 residues: Chorismate synthase (394 aa).

Residues arginine 40 and arginine 46 each contribute to the NADP(+) site. Residues 135 to 137, 255 to 256, glycine 302, 317 to 321, and arginine 343 contribute to the FMN site; these read RAS, QA, and KPISS.

This sequence belongs to the chorismate synthase family. In terms of assembly, homotetramer. FMNH2 is required as a cofactor.

It carries out the reaction 5-O-(1-carboxyvinyl)-3-phosphoshikimate = chorismate + phosphate. Its pathway is metabolic intermediate biosynthesis; chorismate biosynthesis; chorismate from D-erythrose 4-phosphate and phosphoenolpyruvate: step 7/7. Its function is as follows. Catalyzes the anti-1,4-elimination of the C-3 phosphate and the C-6 proR hydrogen from 5-enolpyruvylshikimate-3-phosphate (EPSP) to yield chorismate, which is the branch point compound that serves as the starting substrate for the three terminal pathways of aromatic amino acid biosynthesis. This reaction introduces a second double bond into the aromatic ring system. This chain is Chorismate synthase, found in Parafrankia sp. (strain EAN1pec).